A 1347-amino-acid chain; its full sequence is Protein dispatched homolog 3 (1347 aa).

Topologically, residues 1 to 67 are cytoplasmic; it reads MDSEDDPLLQ…LGWAFTNPCC (67 aa). The chain crosses the membrane as a helical span at residues 68–88; the sequence is AGLVLFLGCSIPMVLSAFMFL. Residues 89 to 417 lie on the Lumenal side of the membrane; sequence YYPPLDIDIS…YEVRRTFNND (329 aa). The interval 156–207 is disordered; the sequence is GNHSRPASRAPRSAPRDTVATQTSAANSSERRRREAPSPEGQVTNQSRARRG. Asn157 carries N-linked (GlcNAc...) asparagine glycosylation. Residues 159-168 are compositionally biased toward low complexity; sequence SRPASRAPRS. Positions 412–570 constitute an SSD domain; the sequence is RTFNNDMLLA…LFTMPAALGL (159 aa). Residues 418-438 form a helical membrane-spanning segment; that stretch reads MLLAFISSSCIAALVYILTSC. Residue Ser439 is a topological domain, cytoplasmic. The chain crosses the membrane as a helical span at residues 440–460; the sequence is VFLSFFGIASIGLSCLVALFL. Over 461–463 the chain is Lumenal; sequence YHV. The chain crosses the membrane as a helical span at residues 464–484; that stretch reads VFGIQYLGILNGVAAFVIVGI. At 485-528 the chain is on the cytoplasmic side; sequence GVDDVFVFINTYRQATHLEDPQLRMIHTIQTAGKATFFTSLTTA. Residues 529-549 form a helical membrane-spanning segment; the sequence is AAYAANVFSQIPAVHDFGLFM. Position 550 (Ser550) is a topological domain, lumenal. A helical transmembrane segment spans residues 551–571; it reads LIVTCCWLAVLFTMPAALGLW. Residues 572-684 are Cytoplasmic-facing; the sequence is SLYMAPLESS…WVLWAAVKSR (113 aa). The chain crosses the membrane as a helical span at residues 685–705; the sequence is WVIVGLFASILILSLVFASRL. Topologically, residues 706 to 1137 are lumenal; the sequence is RPASRAPLLF…IFMEIIGVQS (432 aa). N-linked (GlcNAc...) asparagine glycosylation is present at Asn976. Residues 1138-1158 traverse the membrane as a helical segment; the sequence is ALYGLVLSLLICVAAVAVFTT. Residue His1159 is a topological domain, cytoplasmic. The chain crosses the membrane as a helical span at residues 1160–1180; the sequence is VLLLLPVLLSILGIVCLVVTI. Residues 1181–1246 lie on the Lumenal side of the membrane; sequence MYWSGWEMGA…TLEAVRHVGV (66 aa). A helical membrane pass occupies residues 1247-1267; it reads AIVSSALTTVIATVPLFFCII. Over 1268 to 1281 the chain is Cytoplasmic; that stretch reads APFAKFGKIVALNT. The helical transmembrane segment at 1282 to 1302 threads the bilayer; that stretch reads GVSILYTLTVSTALLGIMAPG. Residues 1303-1310 lie on the Lumenal side of the membrane; it reads SFTRTRTS. A helical transmembrane segment spans residues 1311-1331; sequence FLKALGAVLLAGALGLGACLV. Topologically, residues 1332–1347 are cytoplasmic; the sequence is LLRSGYKIPLPSGATL.

The protein belongs to the patched family. Expressed in brain, retina, testis and thymus.

The protein localises to the endoplasmic reticulum membrane. Its subcellular location is the nucleus membrane. It is found in the cytoplasmic vesicle membrane. Its function is as follows. Plays a role in neuronal proliferation and differentiation. Plays a role in the accumulation of cellular cholesterol. Involved in intracellular lipid droplet formation. May contribute to cholesterol homeostasis in neuronal cells. The sequence is that of Protein dispatched homolog 3 from Mus musculus (Mouse).